Consider the following 876-residue polypeptide: Valine--tRNA ligase (876 aa).

The 'HIGH' region motif lies at 43 to 53 (PNVTGVLHMGH). A 'KMSKS' region motif is present at residues 533–537 (KMSKS). Lys-536 is a binding site for ATP. A coiled-coil region spans residues 804–876 (GALIDVEEEI…DSLNQLQSTK (73 aa)).

This sequence belongs to the class-I aminoacyl-tRNA synthetase family. ValS type 1 subfamily. In terms of assembly, monomer.

Its subcellular location is the cytoplasm. The catalysed reaction is tRNA(Val) + L-valine + ATP = L-valyl-tRNA(Val) + AMP + diphosphate. Catalyzes the attachment of valine to tRNA(Val). As ValRS can inadvertently accommodate and process structurally similar amino acids such as threonine, to avoid such errors, it has a 'posttransfer' editing activity that hydrolyzes mischarged Thr-tRNA(Val) in a tRNA-dependent manner. The chain is Valine--tRNA ligase from Porphyromonas gingivalis (strain ATCC 33277 / DSM 20709 / CIP 103683 / JCM 12257 / NCTC 11834 / 2561).